The sequence spans 174 residues: Protein GrpE (174 aa).

Belongs to the GrpE family. As to quaternary structure, homodimer.

The protein localises to the cytoplasm. In terms of biological role, participates actively in the response to hyperosmotic and heat shock by preventing the aggregation of stress-denatured proteins, in association with DnaK and GrpE. It is the nucleotide exchange factor for DnaK and may function as a thermosensor. Unfolded proteins bind initially to DnaJ; upon interaction with the DnaJ-bound protein, DnaK hydrolyzes its bound ATP, resulting in the formation of a stable complex. GrpE releases ADP from DnaK; ATP binding to DnaK triggers the release of the substrate protein, thus completing the reaction cycle. Several rounds of ATP-dependent interactions between DnaJ, DnaK and GrpE are required for fully efficient folding. This Methanothermobacter thermautotrophicus (strain ATCC 29096 / DSM 1053 / JCM 10044 / NBRC 100330 / Delta H) (Methanobacterium thermoautotrophicum) protein is Protein GrpE.